The sequence spans 347 residues: uncharacterized protein (347 aa).

Residues 1–21 form the signal peptide; it reads MRYRIFLLFFFALLPTSLVWA.

This is an uncharacterized protein from Escherichia coli (strain K12).